The primary structure comprises 378 residues: Probable pectin lyase A (378 aa).

An N-terminal signal peptide occupies residues 1 to 19 (MKFPAFITAIISIASLSSA). 2 cysteine pairs are disulfide-bonded: cysteine 82-cysteine 101 and cysteine 91-cysteine 225. Arginine 255 is an active-site residue. Residues cysteine 321 and cysteine 329 are joined by a disulfide bond.

It belongs to the polysaccharide lyase 1 family.

Its subcellular location is the secreted. It catalyses the reaction Eliminative cleavage of (1-&gt;4)-alpha-D-galacturonan methyl ester to give oligosaccharides with 4-deoxy-6-O-methyl-alpha-D-galact-4-enuronosyl groups at their non-reducing ends.. Its function is as follows. Pectinolytic enzymes consist of four classes of enzymes: pectin lyase, polygalacturonase, pectin methylesterase and rhamnogalacturonase. Among pectinolytic enzymes, pectin lyase is the most important in depolymerization of pectin, since it cleaves internal glycosidic bonds of highly methylated pectins. This is Probable pectin lyase A (pelA) from Aspergillus terreus (strain NIH 2624 / FGSC A1156).